The primary structure comprises 197 residues: Nucleoid occlusion factor SlmA (197 aa).

Residues 7–67 form the HTH tetR-type domain; sequence INRREHILQC…GLIDFIEESL (61 aa). Residues 30-49 constitute a DNA-binding region (H-T-H motif); sequence TTAKLAAEVGVSEAALYRHF.

Belongs to the nucleoid occlusion factor SlmA family. In terms of assembly, homodimer. Interacts with FtsZ.

The protein localises to the cytoplasm. It is found in the nucleoid. Its function is as follows. Required for nucleoid occlusion (NO) phenomenon, which prevents Z-ring formation and cell division over the nucleoid. Acts as a DNA-associated cell division inhibitor that binds simultaneously chromosomal DNA and FtsZ, and disrupts the assembly of FtsZ polymers. SlmA-DNA-binding sequences (SBS) are dispersed on non-Ter regions of the chromosome, preventing FtsZ polymerization at these regions. The polypeptide is Nucleoid occlusion factor SlmA (Shewanella sediminis (strain HAW-EB3)).